The chain runs to 147 residues: Large ribosomal subunit protein bL9 (147 aa).

It belongs to the bacterial ribosomal protein bL9 family.

Its function is as follows. Binds to the 23S rRNA. The polypeptide is Large ribosomal subunit protein bL9 (Campylobacter lari (strain RM2100 / D67 / ATCC BAA-1060)).